We begin with the raw amino-acid sequence, 456 residues long: Bifunctional protein GlmU (456 aa).

The interval 1–230 (MDKRFAVILA…FQETLGVNDR (230 aa)) is pyrophosphorylase. UDP-N-acetyl-alpha-D-glucosamine-binding positions include 9–12 (LAAG), Lys-23, Gln-73, and 78–79 (GT). Asp-103 contacts Mg(2+). The UDP-N-acetyl-alpha-D-glucosamine site is built by Gly-140, Glu-155, Asn-170, and Asn-228. Position 228 (Asn-228) interacts with Mg(2+). Residues 231–251 (VALSQAEMYMKERINKRHMQN) form a linker region. The segment at 252–456 (GVTLIDPMNT…EDYVKNIHKK (205 aa)) is N-acetyltransferase. The UDP-N-acetyl-alpha-D-glucosamine site is built by Arg-333 and Lys-351. The Proton acceptor role is filled by His-363. The UDP-N-acetyl-alpha-D-glucosamine site is built by Tyr-366 and Asn-377. Residues 386–387 (NY), Ala-423, and Arg-440 each bind acetyl-CoA.

This sequence in the N-terminal section; belongs to the N-acetylglucosamine-1-phosphate uridyltransferase family. It in the C-terminal section; belongs to the transferase hexapeptide repeat family. As to quaternary structure, homotrimer. The cofactor is Mg(2+).

The protein resides in the cytoplasm. It catalyses the reaction alpha-D-glucosamine 1-phosphate + acetyl-CoA = N-acetyl-alpha-D-glucosamine 1-phosphate + CoA + H(+). The catalysed reaction is N-acetyl-alpha-D-glucosamine 1-phosphate + UTP + H(+) = UDP-N-acetyl-alpha-D-glucosamine + diphosphate. Its pathway is nucleotide-sugar biosynthesis; UDP-N-acetyl-alpha-D-glucosamine biosynthesis; N-acetyl-alpha-D-glucosamine 1-phosphate from alpha-D-glucosamine 6-phosphate (route II): step 2/2. It participates in nucleotide-sugar biosynthesis; UDP-N-acetyl-alpha-D-glucosamine biosynthesis; UDP-N-acetyl-alpha-D-glucosamine from N-acetyl-alpha-D-glucosamine 1-phosphate: step 1/1. The protein operates within bacterial outer membrane biogenesis; LPS lipid A biosynthesis. In terms of biological role, catalyzes the last two sequential reactions in the de novo biosynthetic pathway for UDP-N-acetylglucosamine (UDP-GlcNAc). The C-terminal domain catalyzes the transfer of acetyl group from acetyl coenzyme A to glucosamine-1-phosphate (GlcN-1-P) to produce N-acetylglucosamine-1-phosphate (GlcNAc-1-P), which is converted into UDP-GlcNAc by the transfer of uridine 5-monophosphate (from uridine 5-triphosphate), a reaction catalyzed by the N-terminal domain. The protein is Bifunctional protein GlmU of Bacillus velezensis (strain DSM 23117 / BGSC 10A6 / LMG 26770 / FZB42) (Bacillus amyloliquefaciens subsp. plantarum).